The sequence spans 479 residues: MAQHTVYFPDAFLTQMREAMPSTLSFDDFLAACQRPLRRSIRVNTLKTSVADFLQLTAPYGWTLTPIPWCEEGFWIERDNEDALPLGSTAEHLSGLFYIQEASSMLPVAALFADGNAPQRVMDVAAAPGSKTTQIAARMNNEGAILANEFSASRVKVLHANISRCGISNVALTHFDGRVFGAAVPEMFDAILLDAPCSGEGVVRKDPDALKNWSPESNQEIAATQRELIDSAFHALRPGGTLVYSTCTLNREENEAVCLWLKETYHDAVEFLPLGDLFPGANKALTEDGFLHVFPQIYDCEGFFVARLRKTQAIPVLPAPKYKVGNFPFSPVKDREAGQIRQAAASVGLNWDENLRLWQRDKELWLFPVGIEALIGKVRFSRLGIKLAETHNKGYRWQHEAVIALASPDNVNAFELTPQEAEEWYRGRDVYPQAAPVADDVLVTFQHQPIGLAKRIGSRLKNSYPRELVRDGKLFTGNA.

S-adenosyl-L-methionine-binding positions include 125 to 131 (AAAPGSK), E149, D176, and D194. C247 serves as the catalytic Nucleophile.

The protein belongs to the class I-like SAM-binding methyltransferase superfamily. RsmB/NOP family.

It is found in the cytoplasm. The catalysed reaction is cytidine(1407) in 16S rRNA + S-adenosyl-L-methionine = 5-methylcytidine(1407) in 16S rRNA + S-adenosyl-L-homocysteine + H(+). In terms of biological role, specifically methylates the cytosine at position 1407 (m5C1407) of 16S rRNA. This Escherichia coli O6:H1 (strain CFT073 / ATCC 700928 / UPEC) protein is Ribosomal RNA small subunit methyltransferase F.